A 502-amino-acid polypeptide reads, in one-letter code: Cytochrome P450 83A1 (502 aa).

A helical membrane pass occupies residues 1–21; sequence MEDIIIGVVALAAVLLFFLYQ. Cys442 is a binding site for heme.

The protein belongs to the cytochrome P450 family. Requires heme as cofactor.

Its subcellular location is the endoplasmic reticulum membrane. The enzyme catalyses an (E)-omega-(methylsulfanyl)-alkanal oxime + glutathione + reduced [NADPH--hemoprotein reductase] + O2 = an S-[(1E)-1-(hydroxyimino)-omega-(methylsulfanyl)alkyl]-L-glutathione + oxidized [NADPH--hemoprotein reductase] + 2 H2O + H(+). Its function is as follows. Involved in the metabolism of aliphatic and aromatic oximes. Involved in the biosynthesis of both short-chain and long-chain aliphatic glucosinolates. In Arabidopsis thaliana (Mouse-ear cress), this protein is Cytochrome P450 83A1 (CYP83A1).